A 401-amino-acid chain; its full sequence is Thermophilic serine proteinase (401 aa).

The N-terminal stretch at 1–24 (MKFKAIVSLSLAVSMSLFPFLVEA) is a signal peptide. The propeptide occupies 25-121 (ASNDGVESPK…AEPNYLFNAA (97 aa)). Residue D126 coordinates Ca(2+). The 267-residue stretch at 133–399 (QYGPQNTYTD…YGRINSYNAV (267 aa)) folds into the Peptidase S8 domain. Catalysis depends on D160, which acts as the Charge relay system. Ca(2+)-binding residues include P168, D169, D171, D179, D184, and D186. H193 serves as the catalytic Charge relay system. Ca(2+) contacts are provided by E204, N207, T209, and I211. A disulfide bridge connects residues C258 and C260. Residues Y297, V300, and D323 each coordinate Na(+). S347 functions as the Charge relay system in the catalytic mechanism.

Belongs to the peptidase S8 family. Ca(2+) is required as a cofactor. The cofactor is Na(+).

It is found in the secreted. In Bacillus sp. (strain AK1), this protein is Thermophilic serine proteinase.